A 596-amino-acid chain; its full sequence is uncharacterized protein (596 aa).

A Helicase ATP-binding domain is found at 44–203; sequence KYLASQPRDF…PFVTYALDAD (160 aa). Residues 285–432 form the Helicase C-terminal domain; it reads RLRQLRTHVP…PHRESTDNPL (148 aa). Disordered stretches follow at residues 420–444 and 506–533; these read LGKP…QTEQ and EQLQ…SVHG. Residues 510–523 show a composition bias toward polar residues; it reads KRTAAQQASSTPDR.

It to M.tuberculosis Rv2917.

This is an uncharacterized protein from Mycobacterium leprae (strain TN).